We begin with the raw amino-acid sequence, 257 residues long: Probable enoyl-CoA hydratase echA17 (257 aa).

It belongs to the enoyl-CoA hydratase/isomerase family.

It catalyses the reaction a (3S)-3-hydroxyacyl-CoA = a (2E)-enoyl-CoA + H2O. The enzyme catalyses a 4-saturated-(3S)-3-hydroxyacyl-CoA = a (3E)-enoyl-CoA + H2O. In terms of biological role, could possibly oxidize fatty acids using specific components. The chain is Probable enoyl-CoA hydratase echA17 (echA17) from Mycobacterium avium (strain 104).